The chain runs to 186 residues: Ribosome-recycling factor (186 aa).

The tract at residues 140 to 163 (LKKAEKDGDIGQDEGRSLSERVQK) is disordered.

The protein belongs to the RRF family.

It localises to the cytoplasm. Its function is as follows. Responsible for the release of ribosomes from messenger RNA at the termination of protein biosynthesis. May increase the efficiency of translation by recycling ribosomes from one round of translation to another. This Rhizobium rhizogenes (strain K84 / ATCC BAA-868) (Agrobacterium radiobacter) protein is Ribosome-recycling factor.